Reading from the N-terminus, the 542-residue chain is NAD-dependent deacetylase sir2D (542 aa).

2 disordered regions span residues 1 to 37 (MNKR…NTPL) and 136 to 160 (ETST…TTTT). The segment covering 8–25 (NNELNEIQNNQNKNNNNK) has biased composition (low complexity). A coiled-coil region spans residues 165–193 (NETILLDILNNNKDEVDDEIQRIGNNVGN). The Deacetylase sirtuin-type domain maps to 283-542 (ATLDLSTFEK…VQDLLNKVKW (260 aa)). Histidine 411 functions as the Proton acceptor in the catalytic mechanism. The Zn(2+) site is built by cysteine 419, cysteine 422, cysteine 443, and cysteine 446.

The protein belongs to the sirtuin family. It depends on Zn(2+) as a cofactor.

The catalysed reaction is N(6)-acetyl-L-lysyl-[protein] + NAD(+) + H2O = 2''-O-acetyl-ADP-D-ribose + nicotinamide + L-lysyl-[protein]. In terms of biological role, NAD-dependent deacetylase, which plays an important role in the regulation of transcriptional repression. This Dictyostelium discoideum (Social amoeba) protein is NAD-dependent deacetylase sir2D (sir2D).